Consider the following 932-residue polypeptide: PMS1 protein homolog 1 (932 aa).

Residues 465 to 493 (TQSENGNKDHIDESGENEEEAGLENSSEI) form a disordered region. The HMG box DNA-binding region spans 571-639 (IKKPMSASAL…RYNSQMKRAI (69 aa)).

It belongs to the DNA mismatch repair MutL/HexB family. As to quaternary structure, component of the DNA mismatch repair (MMR) complex composed at least of MSH2, MSH3, MSH6, PMS1 and MLH1. The MutL-beta complex is a heterodimer of PMS1 and MLH1. Interacts with MCM9.

The protein localises to the nucleus. Functionally, probably involved in the repair of mismatches in DNA. This is PMS1 protein homolog 1 (PMS1) from Homo sapiens (Human).